Here is a 1129-residue protein sequence, read N- to C-terminus: Ubiquitin carboxyl-terminal hydrolase 7 (1129 aa).

Residues 29 to 169 (EGHLALDIER…DDVIRLRCRF (141 aa)) form the MATH domain. The USP domain maps to 190–500 (IGLRNQGATC…SAYMLVYVRD (311 aa)). Residue C199 is the Nucleophile of the active site. Residue H439 is the Proton acceptor of the active site.

This sequence belongs to the peptidase C19 family.

The protein localises to the nucleus. The enzyme catalyses Thiol-dependent hydrolysis of ester, thioester, amide, peptide and isopeptide bonds formed by the C-terminal Gly of ubiquitin (a 76-residue protein attached to proteins as an intracellular targeting signal).. Functionally, hydrolase that deubiquitinates target proteins. The chain is Ubiquitin carboxyl-terminal hydrolase 7 from Caenorhabditis briggsae.